The primary structure comprises 66 residues: Large ribosomal subunit protein bL32 (66 aa).

It belongs to the bacterial ribosomal protein bL32 family.

The chain is Large ribosomal subunit protein bL32 from Rickettsia bellii (strain OSU 85-389).